We begin with the raw amino-acid sequence, 99 residues long: Mu-hexatoxin-Mg1c (99 aa).

3 cysteine pairs are disulfide-bonded: Cys-61/Cys-75, Cys-68/Cys-80, and Cys-74/Cys-94.

Belongs to the neurotoxin 14 (magi-1) family. 09 (magi-1) subfamily. In terms of tissue distribution, expressed by the venom gland.

Its subcellular location is the secreted. Inhibits voltage-gated sodium channels by binding to site 3. Insecticidal neurotoxin. The protein is Mu-hexatoxin-Mg1c of Macrothele gigas (Japanese funnel web spider).